The sequence spans 353 residues: D-alanine--D-alanine ligase (353 aa).

Residues 141–349 (KAAFAAAGLS…LPQLVAELVD (209 aa)) enclose the ATP-grasp domain. Residue 176–231 (EQELGYPCFVKPANLGSSVGITKANNRDELLAGLHQAAALDPRLLVEQGVNARELE) participates in ATP binding. Positions 302, 316, and 318 each coordinate Mg(2+).

The protein belongs to the D-alanine--D-alanine ligase family. It depends on Mg(2+) as a cofactor. Mn(2+) is required as a cofactor.

The protein localises to the cytoplasm. The enzyme catalyses 2 D-alanine + ATP = D-alanyl-D-alanine + ADP + phosphate + H(+). Its pathway is cell wall biogenesis; peptidoglycan biosynthesis. Its function is as follows. Cell wall formation. This is D-alanine--D-alanine ligase from Synechococcus sp. (strain WH7803).